Consider the following 256-residue polypeptide: Calsenilin (256 aa).

A disordered region spans residues 1–20; the sequence is MQPAKEVTKASDGSLLGDLG. S14 carries the post-translational modification Phosphoserine. K26 is covalently cross-linked (Glycyl lysine isopeptide (Lys-Gly) (interchain with G-Cter in SUMO1)). 2 S-palmitoyl cysteine lipidation sites follow: C45 and C46. Residue S60 is modified to Phosphoserine. S63 is subject to Phosphoserine; by CK1. Residues 67-123 enclose the EF-hand 1; degenerate domain; the sequence is LELSTVRHQPEGLDQLQAQTKFTKKELQSLYRGFKNECPTGLVDEDTFKLIYAQFFP. K90 is covalently cross-linked (Glycyl lysine isopeptide (Lys-Gly) (interchain with G-Cter in SUMO1)). EF-hand domains are found at residues 126 to 161, 162 to 197, and 210 to 245; these read DATT…LLRG, TVHE…IYDM, and APAE…DENI. Positions 175, 177, 179, 181, 186, 223, 225, 227, and 234 each coordinate Ca(2+). The interaction with KCND2 stretch occupies residues 243 to 256; the sequence is ENIMSSMQLFENVI.

The protein belongs to the recoverin family. In terms of assembly, binds to DNA as a homomultimer. Dimerization is induced by binding to calcium. Interacts with the C-terminus of PSEN1 and PSEN2 and with PSEN2 CTF subunit. Associates with KCN1. Component of heteromultimeric potassium channels. Identified in potassium channel complexes containing KCND1, KCND2, KCND3, KCNIP1, KCNIP2, KCNIP3, KCNIP4, DPP6 and DPP10. Interacts with KCND2 and KCND3. Post-translationally, palmitoylated. Palmitoylation enhances association with the plasma membrane. Proteolytically cleaved by caspase-3. In terms of processing, phosphorylation at Ser-63 inhibits cleavage by CASP3. In terms of tissue distribution, highly expressed in brain. Widely expressed at lower levels. Expression levels are elevated in brain cortex regions affected by Alzheimer disease.

The protein localises to the cytoplasm. The protein resides in the cell membrane. Its subcellular location is the endoplasmic reticulum. It is found in the golgi apparatus. It localises to the nucleus. Functionally, calcium-dependent transcriptional repressor that binds to the DRE element of genes including PDYN and FOS. Affinity for DNA is reduced upon binding to calcium and enhanced by binding to magnesium. Seems to be involved in nociception. In terms of biological role, regulatory subunit of Kv4/D (Shal)-type voltage-gated rapidly inactivating A-type potassium channels, such as KCND2/Kv4.2 and KCND3/Kv4.3. Modulates channel expression at the cell membrane, gating characteristics, inactivation kinetics and rate of recovery from inactivation in a calcium-dependent and isoform-specific manner. Its function is as follows. May play a role in the regulation of PSEN2 proteolytic processing and apoptosis. Together with PSEN2 involved in modulation of amyloid-beta formation. The chain is Calsenilin (KCNIP3) from Homo sapiens (Human).